Here is a 129-residue protein sequence, read N- to C-terminus: Small ribosomal subunit protein uS9 (129 aa).

Belongs to the universal ribosomal protein uS9 family.

In Aliarcobacter butzleri (strain RM4018) (Arcobacter butzleri), this protein is Small ribosomal subunit protein uS9.